The following is a 56-amino-acid chain: Protein YqiD (56 aa).

Residues 2-22 (FIAWYWIVLIALVVVGYFLHL) traverse the membrane as a helical segment.

It localises to the cell inner membrane. This chain is Protein YqiD, found in Escherichia coli (strain K12).